The sequence spans 183 residues: Translation initiation factor IF-3 (183 aa).

It belongs to the IF-3 family. Monomer.

It localises to the cytoplasm. IF-3 binds to the 30S ribosomal subunit and shifts the equilibrium between 70S ribosomes and their 50S and 30S subunits in favor of the free subunits, thus enhancing the availability of 30S subunits on which protein synthesis initiation begins. The protein is Translation initiation factor IF-3 of Aliivibrio salmonicida (strain LFI1238) (Vibrio salmonicida (strain LFI1238)).